The primary structure comprises 40 residues: uncharacterized protein (40 aa).

This is an uncharacterized protein from Haemophilus influenzae (strain ATCC 51907 / DSM 11121 / KW20 / Rd).